The primary structure comprises 59 residues: Large ribosomal subunit protein uL30 (59 aa).

The protein belongs to the universal ribosomal protein uL30 family. As to quaternary structure, part of the 50S ribosomal subunit.

This is Large ribosomal subunit protein uL30 from Hydrogenobaculum sp. (strain Y04AAS1).